Here is a 235-residue protein sequence, read N- to C-terminus: Small ribosomal subunit protein uS3 (235 aa).

In terms of domain architecture, KH type-2 spans 39-107; that stretch reads VRQFLNKELA…PAQINIAEVK (69 aa). Residues 216–235 form a disordered region; sequence QPEQQPTDKPKKVPRGKGRK.

Belongs to the universal ribosomal protein uS3 family. As to quaternary structure, part of the 30S ribosomal subunit. Forms a tight complex with proteins S10 and S14.

Its function is as follows. Binds the lower part of the 30S subunit head. Binds mRNA in the 70S ribosome, positioning it for translation. This chain is Small ribosomal subunit protein uS3, found in Aggregatibacter actinomycetemcomitans (Actinobacillus actinomycetemcomitans).